The chain runs to 354 residues: Neutral protease 2 homolog MEP3 (354 aa).

The N-terminal stretch at 1–19 (MHFTSSLLALVALTTQALA) is a signal peptide. A propeptide spanning residues 20–179 (FPLNDLPKRD…QSAIPKLEKR (160 aa)) is cleaved from the precursor. Intrachain disulfides connect cysteine 186-cysteine 256 and cysteine 263-cysteine 281. Histidine 305 lines the Zn(2+) pocket. The active site involves glutamate 306. 2 residues coordinate Zn(2+): histidine 309 and aspartate 320.

This sequence belongs to the peptidase M35 family. Zn(2+) is required as a cofactor.

The protein resides in the secreted. It carries out the reaction Preferential cleavage of bonds with hydrophobic residues in P1'. Also 3-Asn-|-Gln-4 and 8-Gly-|-Ser-9 bonds in insulin B chain.. In terms of biological role, secreted metalloproteinase that allows assimilation of proteinaceous substrates. Shows high activities on basic nuclear substrates such as histone and protamine. May be involved in virulence. The polypeptide is Neutral protease 2 homolog MEP3 (MEP3) (Coccidioides posadasii (strain C735) (Valley fever fungus)).